Here is an 839-residue protein sequence, read N- to C-terminus: Amyloid-beta A4 precursor protein-binding family A member 1 (839 aa).

3 disordered regions span residues 1-118, 235-346, and 362-437; these read MNHL…DESA, RLHH…EKRD, and VKTR…ESRK. Positions 23–38 are enriched in acidic residues; sequence ESVEADLEHPEVEEEQ. Residue S79 is modified to Phosphoserine. Basic and acidic residues-rich tracts occupy residues 103–112 and 237–255; these read DGYEAERAQD and HHYD…KEAE. A munc-18-1 binding region spans residues 227–315; that stretch reads YRQEALGARL…TPGGGHPDSP (89 aa). S243, S247, S249, S264, S281, and S286 each carry phosphoserine. T306 is subject to Phosphothreonine. Phosphoserine is present on residues S314 and S369. T372 is subject to Phosphothreonine. An LIN-2/CASK binding region spans residues 375 to 438; sequence EPKEPIWVMR…ASTNKESRKS (64 aa). Over residues 389–400 the composition is skewed to basic and acidic residues; it reads PTRDCDDQRPVD. Residues 401-417 show a composition bias toward low complexity; the sequence is GDSPSPGSSSPLGAESS. Phosphoserine is present on residues S403, S405, S410, and S570. The 187-residue stretch at 459–645 folds into the PID domain; the sequence is DGIIFAANYL…LLNTQDMYND (187 aa). An autoinhibitory helix linker region spans residues 628 to 643; that stretch reads LSQKEYSDLLNTQDMY. PDZ domains follow at residues 658–744 and 749–824; these read DVFI…IVRC and TVLI…TMPA.

As to quaternary structure, part of a multimeric complex containing STXBP1 and STX1A. Interacts with STXBP1. Component of the brain-specific heterotrimeric complex (LIN-10-LIN-2-LIN-7 complex) composed of at least APBA1, CASK, and LIN7, which associates with the motor protein KIF17 to transport vesicles along microtubules. Within the complex, interacts (via PDZ domain) with the motor protein KIF17; the interaction is direct and is required for association of KIF17 with the cargo that is to be transported. Binds to the cytoplasmic domain of amyloid protein (APP). Interacts (via PDZ 1 and 2 domains) with FSPB. Isoform 2 interacts (via its truncated PID domain) with active, GTP-bound RAB6A and RAB6B. In terms of tissue distribution, brain. Detected in the cerebellum, hippocampus, olfactory system, piriform and entorhinal cortex, supraoptic nucleus of the hypothalamus, substantia nigra, and other mesencephalic areas.

The protein resides in the cytoplasm. The protein localises to the perinuclear region. It localises to the nucleus. It is found in the golgi apparatus. Its function is as follows. Putative function in synaptic vesicle exocytosis by binding to Munc18-1, an essential component of the synaptic vesicle exocytotic machinery. May modulate processing of the amyloid-beta precursor protein (APP) and hence formation of APP-beta. The sequence is that of Amyloid-beta A4 precursor protein-binding family A member 1 (Apba1) from Rattus norvegicus (Rat).